Consider the following 389-residue polypeptide: LL-diaminopimelate aminotransferase (389 aa).

The substrate site is built by Y16 and G41. Residues Y70, 104-105 (SK), Y129, N179, Y210, and 239-241 (SLS) contribute to the pyridoxal 5'-phosphate site. Positions 105, 129, and 179 each coordinate substrate. Residue K242 is modified to N6-(pyridoxal phosphate)lysine. R250 contacts pyridoxal 5'-phosphate. Position 369 (R369) interacts with substrate.

The protein belongs to the class-I pyridoxal-phosphate-dependent aminotransferase family. LL-diaminopimelate aminotransferase subfamily. As to quaternary structure, homodimer. The cofactor is pyridoxal 5'-phosphate.

It catalyses the reaction (2S,6S)-2,6-diaminopimelate + 2-oxoglutarate = (S)-2,3,4,5-tetrahydrodipicolinate + L-glutamate + H2O + H(+). It participates in amino-acid biosynthesis; L-lysine biosynthesis via DAP pathway; LL-2,6-diaminopimelate from (S)-tetrahydrodipicolinate (aminotransferase route): step 1/1. Its function is as follows. Involved in the synthesis of meso-diaminopimelate (m-DAP or DL-DAP), required for both lysine and peptidoglycan biosynthesis. Catalyzes the direct conversion of tetrahydrodipicolinate to LL-diaminopimelate. The chain is LL-diaminopimelate aminotransferase from Nitratidesulfovibrio vulgaris (strain DSM 19637 / Miyazaki F) (Desulfovibrio vulgaris).